The sequence spans 116 residues: Spexin (116 aa).

A signal peptide spans 1–26; sequence MKGFKSLVVMTLTLFLVFSFMGNCNS. The propeptide occupies 27-35; it reads APQRLFERR. Glutamine 49 bears the Glutamine amide mark. Propeptides lie at residues 50-116 and 74-116; these read GRRF…LLNW and PNSQ…LLNW. Residues 53–73 are compositionally biased toward basic and acidic residues; that stretch reads FLSDQSRRKDLSDRPPLERRS. The segment at 53-80 is disordered; it reads FLSDQSRRKDLSDRPPLERRSPNSQQLT.

It belongs to the spexin family.

Its subcellular location is the secreted. It is found in the extracellular space. It localises to the cytoplasmic vesicle. The protein localises to the secretory vesicle. Its function is as follows. Plays a role as a central modulator of cardiovascular and renal function and nociception. Also plays a role in energy metabolism and storage. Inhibits adrenocortical cell proliferation with minor stimulation on corticosteroid release. Functionally, acts as a ligand for galanin receptors GALR2 and GALR3. Intracerebroventricular administration of the peptide induces an increase in arterial blood pressure, a decrease in both heart rate and renal excretion and delayed natriuresis. Intraventricular administration of the peptide induces antinociceptive activity. Also induces contraction of muscarinic-like stomach smooth muscles. Intraperitoneal administration of the peptide induces a reduction in food consumption and body weight. Inhibits long chain fatty acid uptake into adipocytes. In terms of biological role, intracerebroventricular administration of the peptide induces a decrease in heart rate, but no change in arterial pressure, and an increase in urine flow rate. Intraventricular administration of the peptide induces antinociceptive activity. This chain is Spexin (SPX), found in Bos taurus (Bovine).